The sequence spans 53 residues: MPQMAPISWLLLFIIFSITFILFCSINYYSYTPNSPKSNELKNINLNSMNWKW.

A helical membrane pass occupies residues 4–24; that stretch reads MAPISWLLLFIIFSITFILFC.

It belongs to the ATPase protein 8 family. In terms of assembly, F-type ATPases have 2 components, CF(1) - the catalytic core - and CF(0) - the membrane proton channel.

The protein resides in the mitochondrion membrane. Mitochondrial membrane ATP synthase (F(1)F(0) ATP synthase or Complex V) produces ATP from ADP in the presence of a proton gradient across the membrane which is generated by electron transport complexes of the respiratory chain. F-type ATPases consist of two structural domains, F(1) - containing the extramembraneous catalytic core and F(0) - containing the membrane proton channel, linked together by a central stalk and a peripheral stalk. During catalysis, ATP synthesis in the catalytic domain of F(1) is coupled via a rotary mechanism of the central stalk subunits to proton translocation. Part of the complex F(0) domain. Minor subunit located with subunit a in the membrane. In Drosophila sechellia (Fruit fly), this protein is ATP synthase protein 8 (mt:ATPase8).